The chain runs to 1374 residues: DNA-directed RNA polymerase subunit beta (1374 aa).

This sequence belongs to the RNA polymerase beta chain family. The RNAP catalytic core consists of 2 alpha, 1 beta, 1 beta' and 1 omega subunit. When a sigma factor is associated with the core the holoenzyme is formed, which can initiate transcription.

The catalysed reaction is RNA(n) + a ribonucleoside 5'-triphosphate = RNA(n+1) + diphosphate. DNA-dependent RNA polymerase catalyzes the transcription of DNA into RNA using the four ribonucleoside triphosphates as substrates. This chain is DNA-directed RNA polymerase subunit beta, found in Acidovorax sp. (strain JS42).